Here is a 1728-residue protein sequence, read N- to C-terminus: MASSLAAQLAQIAANSRTSLNAKALKATHSKSLIWEPRVAAGQTFAEIYQLSYEGFEELCNLDARFAQYGASLFSEQSQEADRIQMNAEENAVLDKRVDSFLHLVGSRLRLMPAIKAIEWLIRRFRSLTAPPRAAIVQQATNRPELLSVISQYTLESCRARQEYPGLVSFWGGVMAEAANGMLDKMRSGRRSIQLENDHILLQQIGPVLSEAMVMKEVPGIQIASYMIVTILAAKGSLNDVALTAFMDQLVHGWNIDTYRPGLVCLCILAQHRAAKQVSSRIAKALIKVQDLVPTLVEISRQHRVDKLANGLALAFIERLSKKGDVRSLPAINSLLSANLLRDKQIKVIYKSMLLAAHKVNDEVDEDGHIRKEIGSSLISLSQTGGDVGDVIRSAIEEVDFNIEELELKLGAAIRPKLAIEQSSEEAGAEEGAMAVENTLSLASTFQELAKLQPSTVSCLSQDSSGLFNDLCAVLLSAAAAESDMEKFDSIPALSRPLATSNPFYLSFYMRVWCGPFPTLAKVAALERVKLRLKESDCADKDFQAIIPYCAVALSDPAKKVRRAAADLIAVLGSLVKEQTRQVWGAKDLYGKVGAPNALDRDTLKALVSSVLVPSLEESVLHEAHVVAVLVSALESSKGSSGTEGGRRHLSHATRLSIFKFICGHVTETPLLAVKIRLLRSLNQIRSISGTSRTDLLLPLLRWWAALGHEEVIELTARESLDEATVDQAVVDVIIANHAAGLETAFELINDPKTALRPHLVQAIFCRVIKMWPSMKSDTKSSTARFMFNITQTLSSSEHGPVITEAVELLRKVELTTDIQLDLIDSLQDQVKLATEKPANKRRRVSTTEQSRSVGLQSNPELKAALNKTTFVLELVQESDPANHPELLPSLFTTLSDLHHLSTLIGSELGYLQNLVLSSLLAMMPAYKDNKNLTIDASVGHGDILATCIQKSSSPAVINAALLLVASLARTAPDVVLQSVMPIFTFMGSSEVIPPLIDTFRRRGRNVVASTKDLLASFVTAYEHIPSHRKHDLFISLVQNLGPEDFLFAILAMFVDRYAATDNMISFTTQMMSSFSVEIQLQTLIKLLDLTSDIFKPKPSLSNVLLGGDGSEHDTQKVATKQLNLLPHLLANKRLKREITQLAERDDMETGKIRDLYATLLESILTLATTVKNKKALYNRCGDALSNLLNLLSIAEFIKSVEALLDRPNVGLRQKVLRALELRVDSESTADPRSREALLAFLPQLTAVIRESDDMSYKHTAVTCVDKISEKYGKKDLDAVAAAAATIAGDYCLGQSSQTLRVMALLCLASLVDVLQDGIVPVLPVAIPKALDYLEQSLVGEEPNAELHNAAYAFVAALAQHIPYMITGSYLDRLLACSNASAAAALDDESSSNRTHCLQFLAKLVDPKVMYNALNQNWASASSCGASAVSEYLDILGMALDKHSKAAVAKNVASLSTIFLSAMDLRRTVVSGQAKTAISPSELGEIETKIGDDALKMIYKLNDAAFRPIFSKLMEWASTGLPKNDASGRTLRLFAVYGFLDTFFGNLKSIVTSYASYIVESAVQVLSSTNFQDADEKELWKWVLRTLGKCFEHDQDGFWQAPAHFGAVAPVLVEQFLNAGAADATEDLIPALVELAAAADSQEHHKELNGTLLKHLRNGQAAVRLAVVQCQQALTVRLGEEWLQALPEMLPYISELQDDDDEVVERENRRWIVEIEEKLGESLDSMLQ.

HEAT repeat units follow at residues Asp540–Glu578, Pro881–Ala926, Phe986–His1024, Leu1191–Thr1229, Arg1235–Lys1274, Ala1622–Ala1662, and Leu1683–Glu1721.

This sequence belongs to the HEATR1/UTP10 family. As to quaternary structure, component of the ribosomal small subunit (SSU) processome.

Its subcellular location is the nucleus. The protein resides in the nucleolus. Its function is as follows. Involved in nucleolar processing of pre-18S ribosomal RNA. Involved in ribosome biosynthesis. This chain is U3 small nucleolar RNA-associated protein 10, found in Chaetomium globosum (strain ATCC 6205 / CBS 148.51 / DSM 1962 / NBRC 6347 / NRRL 1970) (Soil fungus).